The following is a 230-amino-acid chain: Probable septum site-determining protein MinC (230 aa).

It belongs to the MinC family. In terms of assembly, interacts with MinD and FtsZ.

Functionally, cell division inhibitor that blocks the formation of polar Z ring septums. Rapidly oscillates between the poles of the cell to destabilize FtsZ filaments that have formed before they mature into polar Z rings. Prevents FtsZ polymerization. The sequence is that of Probable septum site-determining protein MinC from Erwinia tasmaniensis (strain DSM 17950 / CFBP 7177 / CIP 109463 / NCPPB 4357 / Et1/99).